We begin with the raw amino-acid sequence, 284 residues long: Formamidopyrimidine-DNA glycosylase (284 aa).

The active-site Schiff-base intermediate with DNA is Pro2. The active-site Proton donor is Glu3. The active-site Proton donor; for beta-elimination activity is Lys60. Residues His94 and Arg113 each coordinate DNA. Residues 243-277 (WVYGRKGEACRVCGTTIERLRLAGRSSHYCPQCQP) form an FPG-type zinc finger. Arg267 functions as the Proton donor; for delta-elimination activity in the catalytic mechanism.

It belongs to the FPG family. As to quaternary structure, monomer. Zn(2+) serves as cofactor.

The catalysed reaction is Hydrolysis of DNA containing ring-opened 7-methylguanine residues, releasing 2,6-diamino-4-hydroxy-5-(N-methyl)formamidopyrimidine.. The enzyme catalyses 2'-deoxyribonucleotide-(2'-deoxyribose 5'-phosphate)-2'-deoxyribonucleotide-DNA = a 3'-end 2'-deoxyribonucleotide-(2,3-dehydro-2,3-deoxyribose 5'-phosphate)-DNA + a 5'-end 5'-phospho-2'-deoxyribonucleoside-DNA + H(+). Its function is as follows. Involved in base excision repair of DNA damaged by oxidation or by mutagenic agents. Acts as a DNA glycosylase that recognizes and removes damaged bases. Has a preference for oxidized purines, such as 7,8-dihydro-8-oxoguanine (8-oxoG). Has AP (apurinic/apyrimidinic) lyase activity and introduces nicks in the DNA strand. Cleaves the DNA backbone by beta-delta elimination to generate a single-strand break at the site of the removed base with both 3'- and 5'-phosphates. The protein is Formamidopyrimidine-DNA glycosylase (mutM) of Synechococcus elongatus.